The primary structure comprises 469 residues: 3-isopropylmalate dehydratase large subunit (469 aa).

3 residues coordinate [4Fe-4S] cluster: Cys-347, Cys-410, and Cys-413.

The protein belongs to the aconitase/IPM isomerase family. LeuC type 1 subfamily. In terms of assembly, heterodimer of LeuC and LeuD. Requires [4Fe-4S] cluster as cofactor.

It catalyses the reaction (2R,3S)-3-isopropylmalate = (2S)-2-isopropylmalate. The protein operates within amino-acid biosynthesis; L-leucine biosynthesis; L-leucine from 3-methyl-2-oxobutanoate: step 2/4. Catalyzes the isomerization between 2-isopropylmalate and 3-isopropylmalate, via the formation of 2-isopropylmaleate. The chain is 3-isopropylmalate dehydratase large subunit from Polynucleobacter necessarius subsp. necessarius (strain STIR1).